The primary structure comprises 87 residues: Acyl-CoA-binding protein 2 (87 aa).

The ACB domain occupies 2 to 87 (VSQLFEEKAK…VDNLIAKYSS (86 aa)). Residues 29-33 (YGLYK), Lys-51, Lys-55, and Tyr-74 contribute to the an acyl-CoA site.

It belongs to the ACBP family.

Binds medium- and long-chain acyl-CoA esters with very high affinity and may function as an intracellular carrier of acyl-CoA esters. This chain is Acyl-CoA-binding protein 2 (ACB2), found in Saccharomyces pastorianus (strain ATCC 76670 / Carlsberg bottom yeast no.2 / CBS 1503 / CLIB 180 / NBRC 10610 / NRRL Y-1525) (Saaz-type lager yeast).